The following is a 408-amino-acid chain: 1-deoxy-D-xylulose 5-phosphate reductoisomerase (408 aa).

NADPH-binding residues include Thr19, Gly20, Ser21, Ile22, Gly45, Asn47, and Asn130. Lys131 lines the 1-deoxy-D-xylulose 5-phosphate pocket. Glu132 lines the NADPH pocket. Asp156 contributes to the Mn(2+) binding site. Positions 157, 158, 182, and 205 each coordinate 1-deoxy-D-xylulose 5-phosphate. Glu158 contacts Mn(2+). Gly211 contributes to the NADPH binding site. Ser218, Asn223, Lys224, and Glu227 together coordinate 1-deoxy-D-xylulose 5-phosphate. Glu227 serves as a coordination point for Mn(2+).

It belongs to the DXR family. The cofactor is Mg(2+). Mn(2+) serves as cofactor.

It carries out the reaction 2-C-methyl-D-erythritol 4-phosphate + NADP(+) = 1-deoxy-D-xylulose 5-phosphate + NADPH + H(+). Its pathway is isoprenoid biosynthesis; isopentenyl diphosphate biosynthesis via DXP pathway; isopentenyl diphosphate from 1-deoxy-D-xylulose 5-phosphate: step 1/6. In terms of biological role, catalyzes the NADPH-dependent rearrangement and reduction of 1-deoxy-D-xylulose-5-phosphate (DXP) to 2-C-methyl-D-erythritol 4-phosphate (MEP). This chain is 1-deoxy-D-xylulose 5-phosphate reductoisomerase, found in Gluconobacter oxydans (strain 621H) (Gluconobacter suboxydans).